Consider the following 921-residue polypeptide: Isoleucine--tRNA ligase (921 aa).

Residues 57 to 67 (PYANGDIHMGH) carry the 'HIGH' region motif. Position 552 (glutamate 552) interacts with L-isoleucyl-5'-AMP. The 'KMSKS' region signature appears at 593 to 597 (KMSKS). Position 596 (lysine 596) interacts with ATP. Residues cysteine 888, cysteine 891, cysteine 908, and cysteine 911 each coordinate Zn(2+).

This sequence belongs to the class-I aminoacyl-tRNA synthetase family. IleS type 1 subfamily. As to quaternary structure, monomer. Requires Zn(2+) as cofactor.

Its subcellular location is the cytoplasm. The enzyme catalyses tRNA(Ile) + L-isoleucine + ATP = L-isoleucyl-tRNA(Ile) + AMP + diphosphate. Functionally, catalyzes the attachment of isoleucine to tRNA(Ile). As IleRS can inadvertently accommodate and process structurally similar amino acids such as valine, to avoid such errors it has two additional distinct tRNA(Ile)-dependent editing activities. One activity is designated as 'pretransfer' editing and involves the hydrolysis of activated Val-AMP. The other activity is designated 'posttransfer' editing and involves deacylation of mischarged Val-tRNA(Ile). This Bacillus cereus (strain G9842) protein is Isoleucine--tRNA ligase.